The primary structure comprises 848 residues: Adenylate cyclase (848 aa).

Residues 1 to 535 (MYLYIETLKQ…DVSHHFPLRL (535 aa)) form a catalytic region. A regulatory region spans residues 541–848 (KALYSPCEIR…DTPLLQQYFS (308 aa)). Phosphohistidine; by CRR is present on His609.

The protein belongs to the adenylyl cyclase class-1 family.

The protein localises to the cytoplasm. It carries out the reaction ATP = 3',5'-cyclic AMP + diphosphate. In Shigella flexneri, this protein is Adenylate cyclase (cyaA).